A 366-amino-acid chain; its full sequence is Inactive protein RESTRICTED TEV MOVEMENT 2 (366 aa).

Positions 14 to 121 (VQYEDFVPKS…LPETSRTEAA (108 aa)) constitute a sHSP domain. One copy of the A-1 repeat lies at 129-133 (LEEKR). The 6 X 5 AA repeats A of L-E-E-[SKR]-[ERK] stretch occupies residues 129–220 (LEEKRLLEES…LEERRLEERK (92 aa)). Residues 135-139 (LEESR) form an A-2 repeat. An A-3 repeat occupies 156-160 (LEEKE). The stretch at 163-176 (IRKLQEEAKAKEEA) is one B-1 repeat. The 3 X 14 AA repeats B of [IMA]-[RK]-K-L-Q-E-E-A-K-A-K-E-[EK]-[LA] stretch occupies residues 163 to 206 (IRKLQEEAKAKEEAEMRKLQEEAKANEEAAAKKLQEEIEAKEKL). One copy of the B-2 repeat lies at 178 to 191 (MRKLQEEAKANEEA). The B-3 repeat unit spans residues 193 to 205 (AKKLQEEIEAKEK). Residues 206 to 210 (LEERK) form an A-4 repeat. The A-5 repeat unit spans residues 211–215 (LEERR). Residues 216–220 (LEERK) form an A-6 repeat. Residues 322–342 (LMMNVGVAALVIFALGAYVSY) traverse the membrane as a helical segment. Residues 345-366 (CSSSSSSSSSSPSSSSSSTKPE) form a disordered region. The segment covering 346–366 (SSSSSSSSSSPSSSSSSTKPE) has biased composition (low complexity).

This sequence belongs to the small heat shock protein (HSP20) family.

The protein resides in the cell membrane. Its function is as follows. Seems to not be involved in heat resistance. Unable to mediate restriction of long-distance movement of the pathogenic tobacco etch virus (TEV) without causing a hypersensitive response or inducing systemic acquired resistance. This chain is Inactive protein RESTRICTED TEV MOVEMENT 2 (RTM2), found in Arabidopsis thaliana (Mouse-ear cress).